The primary structure comprises 114 residues: Protein yippee-like (114 aa).

Residues 14-111 enclose the Yippee domain; it reads RTYSCVHCRA…IELAHMIKEN (98 aa). Residues cysteine 18, cysteine 21, cysteine 74, and cysteine 77 each coordinate Zn(2+).

The protein belongs to the yippee family.

In terms of biological role, involved in regulating synaptic transmission in presynaptic neurons. In class IV dendritic arborization neurons (nociceptors), involved in regulating activation of their second-order neurons (SONs) and maintaining synaptic contact between nociceptors and their SONs. The protein is Protein yippee-like of Drosophila melanogaster (Fruit fly).